Consider the following 193-residue polypeptide: Cilia- and flagella-associated protein 20 (193 aa).

It belongs to the CFAP20 family.

The protein resides in the nucleus. It is found in the cytoplasm. Its subcellular location is the cytoskeleton. The protein localises to the microtubule organizing center. It localises to the centrosome. The protein resides in the centriole. It is found in the cilium basal body. Its subcellular location is the cilium axoneme. Its function is as follows. Cilium- and flagellum-specific protein that plays a role in axonemal structure organization and motility. Microtubule inner protein (MIP) part of the dynein-decorated doublet microtubules (DMTs) in cilia axoneme, which is required for motile cilia beating. Involved in the regulation of the size and morphology of cilia. Required for axonemal microtubules polyglutamylation. The polypeptide is Cilia- and flagella-associated protein 20 (cfap20) (Xenopus laevis (African clawed frog)).